A 1200-amino-acid chain; its full sequence is Hyalin (1200 aa).

HYR domains are found at residues 1–39 (SSHN…TVTA), 40–123 (TDTT…NVIE), 124–207 (VDTT…NVIE), 208–292 (VDTT…NVIE), 293–376 (VDTT…NVVE), 377–460 (VDTT…NVVE), 461–544 (VDTT…TVEE), 546–629 (VDTT…TVIA), 630–713 (VDTT…TISA), 714–797 (VDTT…VINA), 798–881 (VDTT…TIGT), 882–966 (VDTM…TVFA), 967–1050 (VDTT…TVTA), 1051–1133 (QDTT…TVNT), and 1134–1200 (QDTT…FFSD).

In terms of assembly, homooligomer in presence of calcium. Post-translationally, glycosylated.

Its subcellular location is the secreted. It is found in the extracellular space. The protein resides in the extracellular matrix. Major constituent of the hyaline layer. The hyaline layer of echinoderm embryos is an extraembryonic matrix that functions as a substrate for cell adhesion through early development. The polypeptide is Hyalin (Strongylocentrotus purpuratus (Purple sea urchin)).